Here is a 66-residue protein sequence, read N- to C-terminus: Toxin Boma6c (66 aa).

The LCN-type CS-alpha/beta domain occupies 2–64; sequence RDAYIAQNYN…VPIRIPGKCH (63 aa). Disulfide bonds link cysteine 12-cysteine 63, cysteine 16-cysteine 36, cysteine 22-cysteine 46, and cysteine 26-cysteine 48.

This sequence belongs to the long (4 C-C) scorpion toxin superfamily. Sodium channel inhibitor family. Alpha subfamily. Expressed by the venom gland.

The protein localises to the secreted. Its function is as follows. Alpha toxins bind voltage-independently at site-3 of sodium channels (Nav) and inhibit the inactivation of the activated channels, thereby blocking neuronal transmission. This is Toxin Boma6c from Buthus occitanus mardochei (Moroccan scorpion).